Here is a 57-residue protein sequence, read N- to C-terminus: Serine protease inhibitor Kazal-type 1 (57 aa).

The region spanning 4–57 (LQRQANCNLKVNGCNKIYNPICGSDGITYANECLLCLENKKRQTSILVEKSGPC) is the Kazal-like domain. Intrachain disulfides connect cysteine 10-cysteine 39, cysteine 17-cysteine 36, and cysteine 25-cysteine 57.

Its subcellular location is the secreted. In terms of biological role, serine protease inhibitor which exhibits anti-trypsin activity. In the pancreas, protects against trypsin-catalyzed premature activation of zymogens. Its function is as follows. In the male reproductive tract, binds to sperm heads where it modulates sperm capacitance by inhibiting calcium uptake and nitrogen oxide (NO) production. This chain is Serine protease inhibitor Kazal-type 1 (SPINK1), found in Canis lupus familiaris (Dog).